Reading from the N-terminus, the 337-residue chain is Ribosomal RNA small subunit methyltransferase C (337 aa).

This sequence belongs to the methyltransferase superfamily. RsmC family. As to quaternary structure, monomer.

The protein resides in the cytoplasm. The catalysed reaction is guanosine(1207) in 16S rRNA + S-adenosyl-L-methionine = N(2)-methylguanosine(1207) in 16S rRNA + S-adenosyl-L-homocysteine + H(+). Its function is as follows. Specifically methylates the guanine in position 1207 of 16S rRNA in the 30S particle. This is Ribosomal RNA small subunit methyltransferase C from Acinetobacter baumannii (strain ACICU).